The primary structure comprises 172 residues: Cell division protein SepF (172 aa).

The segment at Asp16–Ser78 is disordered. Positions Gly17–Glu48 are enriched in basic and acidic residues.

This sequence belongs to the SepF family. Homodimer. Interacts with FtsZ.

It localises to the cytoplasm. Its function is as follows. Cell division protein that is part of the divisome complex and is recruited early to the Z-ring. Probably stimulates Z-ring formation, perhaps through the cross-linking of FtsZ protofilaments. Its function overlaps with FtsA. The sequence is that of Cell division protein SepF from Renibacterium salmoninarum (strain ATCC 33209 / DSM 20767 / JCM 11484 / NBRC 15589 / NCIMB 2235).